A 333-amino-acid chain; its full sequence is NADH-quinone oxidoreductase subunit H (333 aa).

Helical transmembrane passes span 15–35 (FFIFFGLAVLLLFAVLGFVTY), 88–108 (FILAPVIAFAPAFMVLAVIPF), 117–137 (IGVGLLYYIAVSGITTIGVVT), 159–179 (ISYEIPLVMSVIGIVLLAGSL), 191–211 (VWYIFVQPIGFVVFLIAAVAE), 239–259 (WAFFMLSEYVYFFGMASLITV), 274–296 (IPGAVWFALKFSSVVFLLIWFRV), and 313–333 (VLLPIALANIFLTALIKELFF).

Belongs to the complex I subunit 1 family. In terms of assembly, NDH-1 is composed of 14 different subunits. Subunits NuoA, H, J, K, L, M, N constitute the membrane sector of the complex.

Its subcellular location is the cell membrane. It carries out the reaction a quinone + NADH + 5 H(+)(in) = a quinol + NAD(+) + 4 H(+)(out). Functionally, NDH-1 shuttles electrons from NADH, via FMN and iron-sulfur (Fe-S) centers, to quinones in the respiratory chain. The immediate electron acceptor for the enzyme in this species is believed to be ubiquinone. Couples the redox reaction to proton translocation (for every two electrons transferred, four hydrogen ions are translocated across the cytoplasmic membrane), and thus conserves the redox energy in a proton gradient. This subunit may bind ubiquinone. This is NADH-quinone oxidoreductase subunit H from Bacillus anthracis (strain A0248).